Here is a 276-residue protein sequence, read N- to C-terminus: Large ribosomal subunit protein uL2 (276 aa).

Positions 224–276 are disordered; the sequence is VMNPVDHPHGGGEGKAPIGRKSPMTPWGKPTLGYKTRKKKNKSDKFIIRRRKK. Residues 258–276 show a composition bias toward basic residues; sequence KTRKKKNKSDKFIIRRRKK.

Belongs to the universal ribosomal protein uL2 family. As to quaternary structure, part of the 50S ribosomal subunit. Forms a bridge to the 30S subunit in the 70S ribosome.

One of the primary rRNA binding proteins. Required for association of the 30S and 50S subunits to form the 70S ribosome, for tRNA binding and peptide bond formation. It has been suggested to have peptidyltransferase activity; this is somewhat controversial. Makes several contacts with the 16S rRNA in the 70S ribosome. The polypeptide is Large ribosomal subunit protein uL2 (Geobacillus thermodenitrificans (strain NG80-2)).